Here is a 710-residue protein sequence, read N- to C-terminus: Lactoperoxidase (710 aa).

A signal peptide spans 1–23; the sequence is MKVLLHLPALLASLTLLQTAASA. A propeptide spanning residues 24 to 80 is cleaved from the precursor; it reads SDDPTAETDIIHDTVEEVKVWVNKAFLDSRDRLKMAMTTKIHSTRHLSDYLKHAKGR. Cys-130 and Cys-143 are joined by a disulfide. Asp-223 is a binding site for heme b. Residue His-224 is the Proton acceptor of the active site. Position 225 (Asp-225) interacts with Ca(2+). Intrachain disulfides connect Cys-244/Cys-254 and Cys-248/Cys-272. The Ca(2+) site is built by Thr-299, Phe-301, Asp-303, and Ser-305. Residue Ser-313 is modified to Phosphoserine. Cysteines 352 and 363 form a disulfide. Positions 373 and 466 each coordinate heme b. A 3'-nitrotyrosine modification is found at Tyr-480. 2 cysteine pairs are disulfide-bonded: Cys-571-Cys-628 and Cys-669-Cys-694.

Belongs to the peroxidase family. Requires Ca(2+) as cofactor. The cofactor is heme b. As to expression, expressed in the colon, including colonocytes and mucin-containing goblet cells. Not detected in the ileum.

Its subcellular location is the secreted. The protein localises to the cytoplasm. It catalyses the reaction 2 a phenolic donor + H2O2 = 2 a phenolic radical donor + 2 H2O. It carries out the reaction thiocyanate + H2O2 + H(+) = hypothiocyanous acid + H2O. The enzyme catalyses iodide + H2O2 = hypoiodite + H2O. In terms of biological role, heme-containing oxidoreductase which catalyzes the conversion of thiocyanate (SCN(-)) into antimicrobial agent hypothiocyanous acid (OSCN(-)) in the presence of hydrogen peroxide (H2O2). Also involved in the conversion of iodide (I(-)) into hypoiodite (IO(-)) in the presence of H2O2. Responsible for the inactivation of a wide range of micro-organisms and hence, important component of defense mechanism. May be implicated in airway host defense against infection. May contribute to maintaining an appropriate H2O2 cellular level, therefore protecting cells from H2O2-caused injuries and inflammation. The chain is Lactoperoxidase from Mus musculus (Mouse).